The chain runs to 166 residues: Deoxyuridine 5'-triphosphate nucleotidohydrolase (166 aa).

The interval Met1 to Ser24 is disordered. Glu138 contacts Mg(2+).

Belongs to the dUTPase family. As to quaternary structure, homotrimer. It depends on Mg(2+) as a cofactor.

The catalysed reaction is dUTP + H2O = dUMP + diphosphate + H(+). It participates in pyrimidine metabolism; dUMP biosynthesis; dUMP from dCTP (dUTP route): step 2/2. This enzyme is involved in nucleotide metabolism: it produces dUMP, the immediate precursor of thymidine nucleotides and it decreases the intracellular concentration of dUTP, preventing uracil incorporation into DNA. In Arabidopsis thaliana (Mouse-ear cress), this protein is Deoxyuridine 5'-triphosphate nucleotidohydrolase (DUT).